Here is a 930-residue protein sequence, read N- to C-terminus: Polypeptide N-acetylgalactosaminyltransferase 5 (930 aa).

Topologically, residues 1–12 (MNKIRKFFRGSG) are cytoplasmic. Residues 13 to 35 (RVLAFIFAASVIWLLFDMAALRL) form a helical; Signal-anchor for type II membrane protein membrane-spanning segment. The Lumenal segment spans residues 36 to 930 (SFSEINAGLL…KWKFEKYYEV (895 aa)). The interval 190 to 209 (KQEAPQNYNVSSDTSKQASE) is disordered. Positions 193–209 (APQNYNVSSDTSKQASE) are enriched in polar residues. N198, N213, and N283 each carry an N-linked (GlcNAc...) asparagine glycan. A Phosphoserine modification is found at S285. Residues N287, N309, N355, and N387 are each glycosylated (N-linked (GlcNAc...) asparagine). A disordered region spans residues 327–381 (DTKEVPNSKTQTVFPKLLGGSPHKQIPRNQSKTSSSPPALKKAVSQSKPTISGGL). Residues 353-363 (PRNQSKTSSSP) are compositionally biased toward polar residues. Cystine bridges form between C476/C708, C699/C779, and C812/C825. The catalytic subdomain A stretch occupies residues 485-594 (LPTTSIIMCF…VGWLEPLLER (110 aa)). Substrate-binding residues include D526 and R555. N568 carries N-linked (GlcNAc...) asparagine glycosylation. D578 is a binding site for Mn(2+). S579 contacts substrate. Mn(2+) is bound at residue H580. A catalytic subdomain B region spans residues 654-716 (IIRCPVMAGG…PCSRVGHIFR (63 aa)). Residue W685 participates in substrate binding. H713 contacts Mn(2+). Residues R716 and Y721 each coordinate substrate. N-linked (GlcNAc...) asparagine glycosylation is found at N766, N817, and N835. The Ricin B-type lectin domain maps to 794-925 (KAPVVRASGV…MELQQKWKFE (132 aa)). Intrachain disulfides connect C848-C863 and C898-C913. N902 carries N-linked (GlcNAc...) asparagine glycosylation.

The protein belongs to the glycosyltransferase 2 family. GalNAc-T subfamily. Interacts with EXT2. Does not interact with EXT1, EXTL1 or EXTL3. Mn(2+) serves as cofactor. As to expression, expressed at low level. Not expressed before E7.5 during embryogenesis. Expressed in dental mesenchyme and tongue. Accumulates in a subset of mesenchymal cells at the ventral-most portions of the 12.5 dpc maxilla and mandible underlying the dental lamina.

It localises to the golgi apparatus membrane. The catalysed reaction is L-seryl-[protein] + UDP-N-acetyl-alpha-D-galactosamine = a 3-O-[N-acetyl-alpha-D-galactosaminyl]-L-seryl-[protein] + UDP + H(+). It carries out the reaction L-threonyl-[protein] + UDP-N-acetyl-alpha-D-galactosamine = a 3-O-[N-acetyl-alpha-D-galactosaminyl]-L-threonyl-[protein] + UDP + H(+). It functions in the pathway protein modification; protein glycosylation. Functionally, catalyzes the initial reaction in O-linked oligosaccharide biosynthesis, the transfer of an N-acetyl-D-galactosamine residue to a serine or threonine residue on the protein receptor. Has activity toward EA2 peptide substrate, but has a weak activity toward Muc2 or Muc1b substrates. This is Polypeptide N-acetylgalactosaminyltransferase 5 (Galnt5) from Mus musculus (Mouse).